A 590-amino-acid polypeptide reads, in one-letter code: L-asparaginase (590 aa).

Residues 6–357 (AHVLVLYTGG…VEKKAMMVKN (352 aa)) form the Asparaginase/glutaminase domain. The active-site O-isoaspartyl threonine intermediate is the Thr16. The segment at 44–351 (NDDDYVSTYY…KDCWELVEKK (308 aa)) is asparaginase. Substrate-binding positions include 85 to 87 (DSS) and 117 to 118 (TD). ANK repeat units follow at residues 398–427 (IFPQLLCYAASNGDIEMLKALHENGVDLSV), 431–460 (NGRNALHVAASAGHVGAVKYLLTQGVSFHL), 497–526 (RLGVELCLCASYGDTETLNSWLAAGADINQ), and 530–559 (NGETALHIAVKSRNKQLVHYLLDRDADPYK).

It in the N-terminal section; belongs to the asparaginase 1 family. In terms of tissue distribution, may be present in the larval cuticle.

It carries out the reaction L-asparagine + H2O = L-aspartate + NH4(+). In Dirofilaria immitis (Canine heartworm), this protein is L-asparaginase.